Here is a 438-residue protein sequence, read N- to C-terminus: MAVSEIKAKFKLNPLTKVPNFHSRRDKDLPGLLPCQLQHKERKLSPSQMRAFQDAYNFFNKDKTGCIDLHGMMCTLAKLGMNLTKHDVHNELRCADIDQDGKVNFSDFLKVLTDKNRFLKAVVPEKGTCLDLAGNPGILLFEILSKLIETSALPKKAISEIVSYFRRKFQETTSGMVWSPDTTGYGKRRFKPDICTPPSSSTAAFANAARIAIMKEKDLFKFLDELKKCNPPSDSPYSKIPIFPLFPNVDGVVMGKPFKDIQKLEMLKRKEPLNFFENYFFHKKDWKTQEANIKPVDPTSGYTTDILTIDQMLKRKQNWTVADAAAIKPHVKRATETYNLGIALEHRKQMLNLWRKIRGDLIGIESKNESFYDTFSTYTWSWNVCQELLSPKDLKLYDAHVNRNALHNSVFSSSSDISECDTDTGRKRKRKGFKGFRQ.

2 EF-hand domains span residues 47–82 (SQMR…LGMN) and 83–118 (LTKH…KNRF). 5 residues coordinate Ca(2+): aspartate 96, aspartate 98, aspartate 100, lysine 102, and aspartate 107. A Phosphotyrosine modification is found at tyrosine 279. A disordered region spans residues 413–438 (SSSDISECDTDTGRKRKRKGFKGFRQ). A compositionally biased stretch (basic residues) spans 426–438 (RKRKRKGFKGFRQ).

This chain is EF-hand calcium-binding domain-containing protein 3 (EFCAB3), found in Bos taurus (Bovine).